Reading from the N-terminus, the 335-residue chain is MTIRVGINGFGRIGRNYFRALLEQGADIEIVAVNDLGDTATTAHLLKYDTILGRLKAEVTHTADTITVDGKTIKVFSERNPADIPWGELNVDIVIESTGIFTKKADAEKHIAGGAKKVLISAPASDEDITIVLGVNEDKYDPAKHNVISNASCTTNCVAPMAKVLDENFGIVKGLMTTIHAYTNDQRILDFPHKDLRRARAAAENIIPTTTGAAKATALVLPQLKGKMDGISMRVPVPTGSATDLVVEVSREVTKDEVNAAFKKAAEGELQGYLSYTEDPIVSSDIVGDPSSCTFDSAMTMVMEGTSVKILGWYDNEWGYSNRLVDLTVFVGNQL.

Residues 12–13, D35, R79, and S121 each bind NAD(+); that span reads RI. Residues 152 to 154 and T183 each bind D-glyceraldehyde 3-phosphate; that span reads SCT. C153 (nucleophile) is an active-site residue. An NAD(+)-binding site is contributed by N184. D-glyceraldehyde 3-phosphate contacts are provided by residues R198, 211 to 212, and R234; that span reads TG. Position 316 (N316) interacts with NAD(+).

This sequence belongs to the glyceraldehyde-3-phosphate dehydrogenase family. Homotetramer.

The protein resides in the cytoplasm. It catalyses the reaction D-glyceraldehyde 3-phosphate + phosphate + NAD(+) = (2R)-3-phospho-glyceroyl phosphate + NADH + H(+). It participates in carbohydrate degradation; glycolysis; pyruvate from D-glyceraldehyde 3-phosphate: step 1/5. Inhibited by pentalenolactone. In terms of biological role, catalyzes the oxidative phosphorylation of glyceraldehyde 3-phosphate (G3P) to 1,3-bisphosphoglycerate (BPG) using the cofactor NAD. The first reaction step involves the formation of a hemiacetal intermediate between G3P and a cysteine residue, and this hemiacetal intermediate is then oxidized to a thioester, with concomitant reduction of NAD to NADH. The reduced NADH is then exchanged with the second NAD, and the thioester is attacked by a nucleophilic inorganic phosphate to produce BPG. The chain is Glyceraldehyde-3-phosphate dehydrogenase 2 (gap2) from Streptomyces avermitilis (strain ATCC 31267 / DSM 46492 / JCM 5070 / NBRC 14893 / NCIMB 12804 / NRRL 8165 / MA-4680).